A 258-amino-acid chain; its full sequence is Thymidylate synthase (258 aa).

Arg-21 is a binding site for dUMP. His-51 is a binding site for (6R)-5,10-methylene-5,6,7,8-tetrahydrofolate. A dUMP-binding site is contributed by 121-122 (RR). The active-site Nucleophile is Cys-141. Residues 161–164 (RSAD), Asn-172, and 202–204 (HLY) contribute to the dUMP site. Asp-164 contributes to the (6R)-5,10-methylene-5,6,7,8-tetrahydrofolate binding site. Ala-257 contacts (6R)-5,10-methylene-5,6,7,8-tetrahydrofolate.

This sequence belongs to the thymidylate synthase family. Bacterial-type ThyA subfamily. In terms of assembly, homodimer.

The protein resides in the cytoplasm. The enzyme catalyses dUMP + (6R)-5,10-methylene-5,6,7,8-tetrahydrofolate = 7,8-dihydrofolate + dTMP. It participates in pyrimidine metabolism; dTTP biosynthesis. Catalyzes the reductive methylation of 2'-deoxyuridine-5'-monophosphate (dUMP) to 2'-deoxythymidine-5'-monophosphate (dTMP) while utilizing 5,10-methylenetetrahydrofolate (mTHF) as the methyl donor and reductant in the reaction, yielding dihydrofolate (DHF) as a by-product. This enzymatic reaction provides an intracellular de novo source of dTMP, an essential precursor for DNA biosynthesis. The chain is Thymidylate synthase from Dichelobacter nodosus (strain VCS1703A).